Here is a 606-residue protein sequence, read N- to C-terminus: Arginine--tRNA ligase (606 aa).

The 'HIGH' region motif lies at 126-136 (PNTNKPLHLGH).

It belongs to the class-I aminoacyl-tRNA synthetase family. In terms of assembly, monomer.

The protein resides in the cytoplasm. The catalysed reaction is tRNA(Arg) + L-arginine + ATP = L-arginyl-tRNA(Arg) + AMP + diphosphate. The sequence is that of Arginine--tRNA ligase from Phocaeicola vulgatus (strain ATCC 8482 / DSM 1447 / JCM 5826 / CCUG 4940 / NBRC 14291 / NCTC 11154) (Bacteroides vulgatus).